The sequence spans 80 residues: Exodeoxyribonuclease 7 small subunit (80 aa).

This sequence belongs to the XseB family. As to quaternary structure, heterooligomer composed of large and small subunits.

It is found in the cytoplasm. The enzyme catalyses Exonucleolytic cleavage in either 5'- to 3'- or 3'- to 5'-direction to yield nucleoside 5'-phosphates.. In terms of biological role, bidirectionally degrades single-stranded DNA into large acid-insoluble oligonucleotides, which are then degraded further into small acid-soluble oligonucleotides. In Rickettsia africae (strain ESF-5), this protein is Exodeoxyribonuclease 7 small subunit.